The following is a 58-amino-acid chain: UPF0339 protein MA_3316 (58 aa).

It belongs to the UPF0339 family.

The protein is UPF0339 protein MA_3316 of Methanosarcina acetivorans (strain ATCC 35395 / DSM 2834 / JCM 12185 / C2A).